The chain runs to 629 residues: Filament-like plant protein 2 (629 aa).

Coiled-coil stretches lie at residues 34 to 61 (WEKA…LEDR) and 102 to 171 (NTGL…LEAE). The disordered stretch occupies residues 186–205 (SSNQSVDSHSDGGRERVEGS). Positions 193–203 (SHSDGGRERVE) are enriched in basic and acidic residues. Residues 270–493 (ELSLMEKLEK…IEEKTMIKRE (224 aa)) adopt a coiled-coil conformation.

The protein belongs to the FPP family. Interacts with WPP/MAF proteins. Binds to COG2; this interaction promotes the association between cortical microtubules and EXO70A1. As to expression, accumulates in preferentially xylem cells.

Its subcellular location is the vesicle. Functionally, ensures, when in complex with FPP3/VETH1 and COG2, the correct secondary cell wall (SCW) deposition pattern by recruiting exocyst components to cortical microtubules in xylem cells during secondary cell wall deposition by recruiting EXO70A1. The sequence is that of Filament-like plant protein 2 from Arabidopsis thaliana (Mouse-ear cress).